The primary structure comprises 207 residues: Hemin/hemoglobin-binding protein 1 (207 aa).

An N-terminal signal peptide occupies residues 1–27 (MKKVLVFAAFIVLFSFSFLSTGLTAQA). The NEAT domain maps to 29–148 (LKDGTYSVDY…RFDEGSAKAL (120 aa)). Positions 151 to 178 (AVKSSDNNTTTPATKSDSSNKVTNPKSS) are disordered. The span at 154-178 (SSDNNTTTPATKSDSSNKVTNPKSS) shows a compositional bias: polar residues. Positions 174–178 (NPKSS) match the NPKXZ sorting signal motif. Ser177 carries the post-translational modification Murein peptidoglycan amidated serine. Residues 178–207 (SDSSQMFLYGIIFVATGAGLILLKRRAIFK) constitute a propeptide, removed by sortase B.

The protein localises to the secreted. It is found in the cell wall. In terms of biological role, binds both host hemin and hemoglobin with affinity in the nanomolar range and presumably directs it to membrane transporters. The protein is Hemin/hemoglobin-binding protein 1 of Listeria monocytogenes serovar 1/2a (strain ATCC BAA-679 / EGD-e).